Reading from the N-terminus, the 248-residue chain is 3-deoxy-manno-octulosonate cytidylyltransferase (248 aa).

It belongs to the KdsB family.

The protein localises to the cytoplasm. It catalyses the reaction 3-deoxy-alpha-D-manno-oct-2-ulosonate + CTP = CMP-3-deoxy-beta-D-manno-octulosonate + diphosphate. It functions in the pathway nucleotide-sugar biosynthesis; CMP-3-deoxy-D-manno-octulosonate biosynthesis; CMP-3-deoxy-D-manno-octulosonate from 3-deoxy-D-manno-octulosonate and CTP: step 1/1. Its pathway is bacterial outer membrane biogenesis; lipopolysaccharide biosynthesis. Functionally, activates KDO (a required 8-carbon sugar) for incorporation into bacterial lipopolysaccharide in Gram-negative bacteria. The protein is 3-deoxy-manno-octulosonate cytidylyltransferase of Chlorobium phaeobacteroides (strain BS1).